Consider the following 142-residue polypeptide: Ctenidin-3 (142 aa).

The signal sequence occupies residues 1–19 (MKHLIPLIVMASVVLAVYA). Position 139 is a tyrosine amide (Tyr-139).

In terms of tissue distribution, expressed in hemocytes (at protein level).

It localises to the secreted. In terms of biological role, antimicrobial protein with bacteriostatic activity against the Gram-negative bacterium E.coli, and very weak activity against the Gram-positive bacterium S.aureus. Lacks activity against the yeast C.albicans. In Cupiennius salei (American wandering spider), this protein is Ctenidin-3.